Here is a 1611-residue protein sequence, read N- to C-terminus: DNA (cytosine-5)-methyltransferase 1 (1611 aa).

An interaction with DMAP1 region spans residues 1–120 (MPARTAPARV…SQTSGEDCRV (120 aa)). Residues 1-148 (MPARTAPARV…RRSKSDGETK (148 aa)) are interaction with DNMT3A. Interaction with the PRC2/EED-EZH2 complex stretches follow at residues 1–334 (MPAR…TEKK) and 306–603 (KPQV…TIRQ). Ser15 is modified (phosphoserine). Residues 16 to 109 (RAFSLPDDVR…SREANGCLEN (94 aa)) enclose the DMAP1-binding domain. At Lys70 the chain carries N6,N6-dimethyllysine; by EHMT2. Positions 123–328 (AEKGKPPKPV…EEKRRRTTYR (206 aa)) are disordered. Ser133 is modified (phosphoserine). Thr137 bears the Phosphothreonine mark. Ser141 is modified (phosphoserine). Position 142 is an N6-methyllysine; by SETD7 (Lys142). A Phosphoserine; by PKB/AKT1 modification is found at Ser143. Positions 149–216 (SEVSSSPRIT…TSRERVAGLL (68 aa)) are interaction with DNMT3B. 2 positions are modified to phosphoserine: Ser152 and Ser154. The residue at position 160 (Lys160) is an N6-acetyllysine. The interaction with PCNA stretch occupies residues 163–174 (RQTTITSHFPRG). A compositionally biased stretch (low complexity) spans 163-174 (RQTTITSHFPRG). At Thr166 the chain carries Phosphothreonine. Residues 177–204 (KRKPEEEPEKVKSDDSVDEEKDQEEKRR) carry the Nuclear localization signal motif. 5 stretches are compositionally biased toward basic and acidic residues: residues 178–191 (RKPE…KSDD), 199–212 (QEEK…RERV), 220–265 (EPGR…RDVR), 279–311 (KDEK…QVSD), and 319–328 (EEKRRRTTYR). Lys188 is subject to N6-acetyllysine. N6-acetyllysine; alternate is present on Lys257. Residue Lys257 forms a Glycyl lysine isopeptide (Lys-Gly) (interchain with G-Cter in SUMO2); alternate linkage. Ser310 carries the post-translational modification Phosphoserine. Residues 329–548 (ELTEKKMTRT…NLNRFTEDSL (220 aa)) form a DNA replication foci-targeting sequence region. Residues Cys351 and Cys354 each contribute to the Zn(2+) site. Residues Ser392 and Ser396 each carry the phosphoserine modification. Zn(2+)-binding residues include Cys412 and His416. A phosphoserine mark is found at Ser507 and Ser547. Residues 594–614 (RAERRQTIRQPAKEKDKGPTK) form a disordered region. A CXXC-type zinc finger spans residues 643–689 (NAFKRRRCGVCEICQQPECGKCKACKDMVKFGGSGRSKQACQKRRCP). Residues Cys650, Cys653, Cys656, Cys661, Cys664, Cys667, Cys683, and Cys688 each coordinate Zn(2+). The autoinhibitory linker stretch occupies residues 690–751 (NMAMKEADDD…SYYKKVCIDS (62 aa)). The segment at 695–726 (EADDDEEVDDNIPEMPSPKKMHQGKKKKQNKN) is disordered. Acidic residues predominate over residues 696-706 (ADDDEEVDDNI). Residue Ser711 is modified to Phosphoserine. Positions 713–725 (KKMHQGKKKKQNK) are enriched in basic residues. Ser729 carries the post-translational modification Phosphoserine. Position 746 is an N6-acetyllysine (Lys746). The region spanning 752-877 (ETLEVGDCVS…QDYARFESPP (126 aa)) is the BAH 1 domain. Ser875 is subject to Phosphoserine. 5 positions are modified to N6-acetyllysine: Lys888, Lys954, Lys958, Lys972, and Lys1051. Residues 969–1097 (HYRKYSDYIK…AKSKSFEDPP (129 aa)) enclose the BAH 2 domain. The tract at residues 1091–1126 (KSFEDPPNHARSTGNKGKGKGKGKNRTKSQTCEPSE) is disordered. 4 repeat units span residues 1106 to 1107 (KG), 1108 to 1109 (KG), 1110 to 1111 (KG), and 1112 to 1113 (KG). Positions 1106–1115 (KGKGKGKGKN) are 5 X 2 AA tandem repeats of K-G. Basic residues predominate over residues 1107 to 1117 (GKGKGKGKNRT). Residues Lys1108, Lys1110, Lys1112, Lys1114, and Lys1118 each carry the N6-acetyllysine modification. Residues 1114–1115 (KN) form a 5; approximate repeat. Residues 1118-1611 (KSQTCEPSEL…AKIKEEAAKD (494 aa)) are interaction with the PRC2/EED-EZH2 complex. Positions 1136 to 1595 (LRTLDVFSGC…LEIKRCMLAK (460 aa)) constitute an SAM-dependent MTase C5-type domain. The interval 1136–1611 (LRTLDVFSGC…AKIKEEAAKD (476 aa)) is catalytic. Residues Ser1143, 1147–1148 (GL), 1165–1166 (EM), 1187–1188 (DC), and Cys1188 each bind S-adenosyl-L-methionine. The active site involves Cys1223. An N6-acetyllysine mark is found at Lys1346 and Lys1412. S-adenosyl-L-methionine-binding residues include Asn1574 and Val1576. A Glycyl lysine isopeptide (Lys-Gly) (interchain with G-Cter in SUMO2) cross-link involves residue Lys1605.

It belongs to the class I-like SAM-binding methyltransferase superfamily. C5-methyltransferase family. Homodimer. Forms a stable complex with E2F1, BB1 and HDAC1. Forms a complex with DMAP1 and HDAC2, with direct interaction. Interacts with the PRC2/EED-EZH2 complex. Probably part of a corepressor complex containing ZNF304, TRIM28, SETDB1 and DNMT1. Interacts with UHRF1; promoting its recruitment to hemimethylated DNA. Interacts with USP7, promoting its deubiquitination. Interacts with PCNA. Interacts with MBD2 and MBD3. Interacts with DNMT3A and DNMT3B. Interacts with UBC9. Interacts with CSNK1D. Interacts with HDAC1. Interacts with BAZ2A/TIP5. Interacts with SIRT7. Interacts with ZNF263; recruited to the SIX3 promoter along with other proteins involved in chromatin modification and transcriptional corepression where it contributes to transcriptional repression. Interacts with L3MBTL3 and DCAF5; the interaction requires DNMT1 methylation at Lys-142 and is necessary to target DNMT1 for ubiquitination by the CRL4-DCAF5 E3 ubiquitin ligase complex and proteasomal degradation. Interacts with PHF20L1; the interaction requires DNMT1 methylation at Lys-142 and protects DNMT1 from ubiquitination and proteasomal degradation. Post-translationally, sumoylated; sumoylation increases activity. Acetylation on multiple lysines, mainly by KAT2B/PCAF, regulates cell cycle G(2)/M transition. Deacetylation of Lys-1346 and Lys-1412 by SIRT1 increases methyltransferase activity. In terms of processing, phosphorylation of Ser-154 by CDKs is important for enzymatic activity and protein stability. Phosphorylation of Ser-143 by AKT1 prevents methylation by SETD7 thereby increasing DNMT1 stability. Post-translationally, methylation at Lys-142 by SETD7 is necessary for the regulation of DNMT1 proteasomal degradation. Ubiquitinated by UHRF1; interaction with USP7 counteracts ubiquitination by UHRF1 by promoting deubiquitination and preventing degradation by the proteasome.

It is found in the nucleus. It carries out the reaction a 2'-deoxycytidine in DNA + S-adenosyl-L-methionine = a 5-methyl-2'-deoxycytidine in DNA + S-adenosyl-L-homocysteine + H(+). Functionally, methylates CpG residues. Preferentially methylates hemimethylated DNA. Associates with DNA replication sites in S phase maintaining the methylation pattern in the newly synthesized strand, that is essential for epigenetic inheritance. Associates with chromatin during G2 and M phases to maintain DNA methylation independently of replication. It is responsible for maintaining methylation patterns established in development. DNA methylation is coordinated with methylation of histones. Mediates transcriptional repression by direct binding to HDAC2. In association with DNMT3B and via the recruitment of CTCFL/BORIS, involved in activation of BAG1 gene expression by modulating dimethylation of promoter histone H3 at H3K4 and H3K9. Probably forms a corepressor complex required for activated KRAS-mediated promoter hypermethylation and transcriptional silencing of tumor suppressor genes (TSGs) or other tumor-related genes in colorectal cancer (CRC) cells. Also required to maintain a transcriptionally repressive state of genes in undifferentiated embryonic stem cells (ESCs). Associates at promoter regions of tumor suppressor genes (TSGs) leading to their gene silencing. Promotes tumor growth. The sequence is that of DNA (cytosine-5)-methyltransferase 1 (DNMT1) from Bos taurus (Bovine).